We begin with the raw amino-acid sequence, 239 residues long: Ribosomal RNA large subunit methyltransferase E (239 aa).

S-adenosyl-L-methionine contacts are provided by glycine 88, tryptophan 90, aspartate 111, aspartate 127, and aspartate 151. Catalysis depends on lysine 191, which acts as the Proton acceptor.

This sequence belongs to the class I-like SAM-binding methyltransferase superfamily. RNA methyltransferase RlmE family.

The protein resides in the cytoplasm. It catalyses the reaction uridine(2552) in 23S rRNA + S-adenosyl-L-methionine = 2'-O-methyluridine(2552) in 23S rRNA + S-adenosyl-L-homocysteine + H(+). Its function is as follows. Specifically methylates the uridine in position 2552 of 23S rRNA at the 2'-O position of the ribose in the fully assembled 50S ribosomal subunit. The polypeptide is Ribosomal RNA large subunit methyltransferase E (Bartonella bacilliformis (strain ATCC 35685 / KC583 / Herrer 020/F12,63)).